We begin with the raw amino-acid sequence, 1068 residues long: Huntingtin-interacting protein 1-related protein (1068 aa).

Residue Met-1 is modified to N-acetylmethionine. The 129-residue stretch at 23 to 151 folds into the ENTH domain; that stretch reads EREQFDKTQA…SFHLKHPQFP (129 aa). Positions 346–644 form a coiled coil; the sequence is GSMKDDRDLQ…LQDAVSKLDD (299 aa). Residues 582–610 form a disordered region; sequence EALSQEQQRSSQEKGELRGQLAEKESQEQ. Over residues 592–608 the composition is skewed to basic and acidic residues; the sequence is SQEKGELRGQLAEKESQ. The 242-residue stretch at 771–1012 folds into the I/LWEQ domain; the sequence is SLDVRQEELG…ELRKQHYVLA (242 aa). The segment at 867 to 924 is important for actin binding; that stretch reads RWTEGLISASKAVGWGATQLVESADKVVLHMGKYEELIVCSHEIAASTAQLVAASKVK. The segment at 1011-1068 is disordered; sequence LAGGMGTPSEEEPSRPSPAPRSGATKKPPLAQKPSIAPRTDNQLDKKDGVYPAQLVNY.

This sequence belongs to the SLA2 family. Homodimer. Interacts with actin; homodimerization promotes actin binding. Interacts with CLTB. Interacts with HIP1. Interacts (via ENTH and I/LWEQ domains) with BCL2L10. As to expression, widely expressed. Expressed at lower levels in skeletal muscle and heart. The level of expression does not change appreciably during development.

The protein resides in the cytoplasm. It is found in the perinuclear region. The protein localises to the endomembrane system. Its subcellular location is the cytoplasmic vesicle. It localises to the clathrin-coated vesicle membrane. Functionally, component of clathrin-coated pits and vesicles, that may link the endocytic machinery to the actin cytoskeleton. Binds 3-phosphoinositides (via ENTH domain). May act through the ENTH domain to promote cell survival by stabilizing receptor tyrosine kinases following ligand-induced endocytosis. The chain is Huntingtin-interacting protein 1-related protein (Hip1r) from Mus musculus (Mouse).